We begin with the raw amino-acid sequence, 264 residues long: Thymidylate synthase (264 aa).

A dUMP-binding site is contributed by R21. H51 serves as a coordination point for (6R)-5,10-methylene-5,6,7,8-tetrahydrofolate. 126–127 is a dUMP binding site; it reads RR. C146 functions as the Nucleophile in the catalytic mechanism. DUMP contacts are provided by residues 166 to 169, N177, and 207 to 209; these read RSAD and HLY. Position 169 (D169) interacts with (6R)-5,10-methylene-5,6,7,8-tetrahydrofolate. A263 provides a ligand contact to (6R)-5,10-methylene-5,6,7,8-tetrahydrofolate.

It belongs to the thymidylate synthase family. Bacterial-type ThyA subfamily. Homodimer.

Its subcellular location is the cytoplasm. The catalysed reaction is dUMP + (6R)-5,10-methylene-5,6,7,8-tetrahydrofolate = 7,8-dihydrofolate + dTMP. It participates in pyrimidine metabolism; dTTP biosynthesis. Its function is as follows. Catalyzes the reductive methylation of 2'-deoxyuridine-5'-monophosphate (dUMP) to 2'-deoxythymidine-5'-monophosphate (dTMP) while utilizing 5,10-methylenetetrahydrofolate (mTHF) as the methyl donor and reductant in the reaction, yielding dihydrofolate (DHF) as a by-product. This enzymatic reaction provides an intracellular de novo source of dTMP, an essential precursor for DNA biosynthesis. In Thiobacillus denitrificans (strain ATCC 25259 / T1), this protein is Thymidylate synthase.